Here is a 256-residue protein sequence, read N- to C-terminus: Signal peptidase I (256 aa).

Active-site residues include S32 and K75.

This sequence belongs to the peptidase S26 family.

The enzyme catalyses Cleavage of hydrophobic, N-terminal signal or leader sequences from secreted and periplasmic proteins.. The protein is Signal peptidase I (lepB) of Aquifex aeolicus (strain VF5).